The primary structure comprises 558 residues: MDLYDDDGESAQSEKVDVPSEESTIAGPETDIPAETIEENVPEVEENTLLEEDSLVDVDSPRPSQQRSKPSKSKRKRKRSSSGESSAAEPEIDAGAKVKGPLSNTNKEINVGTEFQAKIADLNLNDKACNEDRDDQDELIWNTPETIDDEKLEAFIRESSDRYLIPIDRALYILTINNFNFDSAIAEVARRNELKDVWTDQEITLFENCYQIFGKNFSQIRSALCHRSLQSIVQFYYESKKRVKYLNFVNSKCDDSSSSEETETPSPYPEAIFESMCDNCGEKAENMQINNAMNRPECRACLIYFNQTGVPRPTSLRLVLAERIRNQVSCPDNMKEYMKDFDKLSAQATGSTFQKRIIVKDQCVEYIIDVDKIPSSSCTENGNVGETSSPSAQKTEIQSESDGSGPLIWRHKKTVCMEEIEVLADDSRRKMFEACQHGSKVDIKLVASWKNDMTNLRKRVEQTYYDPDLNPTYLFSHDRVHYSQDWTQLERSQVIRCFNMYGAHFEHIADVIGTKTPDQVYQFYLENQKAIDAADEEFLADMKNPERLADMEEEEDSI.

Residues 1-106 (MDLYDDDGES…KVKGPLSNTN (106 aa)) are disordered. The span at 36–56 (TIEENVPEVEENTLLEEDSLV) shows a compositional bias: acidic residues. Over residues 69–80 (KPSKSKRKRKRS) the composition is skewed to basic residues. Positions 107–192 (KEINVGTEFQ…SAIAEVARRN (86 aa)) constitute an ELM2 domain. The region spanning 193–244 (ELKDVWTDQEITLFENCYQIFGKNFSQIRSALCHRSLQSIVQFYYESKKRVK) is the SANT 1 domain. The GATA-type zinc-finger motif lies at 271 to 325 (AIFESMCDNCGEKAENMQINNAMNRPECRACLIYFNQTGVPRPTSLRLVLAERIR). Positions 378–402 (CTENGNVGETSSPSAQKTEIQSESD) are enriched in polar residues. Residues 378–406 (CTENGNVGETSSPSAQKTEIQSESDGSGP) are disordered. The SANT 2 domain maps to 481–532 (HYSQDWTQLERSQVIRCFNMYGAHFEHIADVIGTKTPDQVYQFYLENQKAID).

This sequence belongs to the CoREST family. Probably part of a large repressor complex. Interacts with histone demethylase spr-5/lsd-1.

It is found in the nucleus. Probable corepressor protein, which probably participates in the transcriptional repression of the presenilin protein hop-1. Probably acts via the formation of a multiprotein complex that deacetylates and demethylates specific sites on histones. Acts redundantly with the transcriptional repressor lin-35 to play a role in vulval morphogenesis and promote germline proliferation. The chain is REST corepressor spr-1 from Caenorhabditis elegans.